The primary structure comprises 100 residues: NAD(P)H-quinone oxidoreductase subunit 4L, chloroplastic (100 aa).

A run of 3 helical transmembrane segments spans residues 1 to 21 (MIEN…YGLI), 29 to 49 (ALMC…TFSN), and 63 to 83 (ISVI…ILII).

The protein belongs to the complex I subunit 4L family. In terms of assembly, NDH is composed of at least 16 different subunits, 5 of which are encoded in the nucleus.

The protein resides in the plastid. The protein localises to the chloroplast thylakoid membrane. The enzyme catalyses a plastoquinone + NADH + (n+1) H(+)(in) = a plastoquinol + NAD(+) + n H(+)(out). It carries out the reaction a plastoquinone + NADPH + (n+1) H(+)(in) = a plastoquinol + NADP(+) + n H(+)(out). Functionally, NDH shuttles electrons from NAD(P)H:plastoquinone, via FMN and iron-sulfur (Fe-S) centers, to quinones in the photosynthetic chain and possibly in a chloroplast respiratory chain. The immediate electron acceptor for the enzyme in this species is believed to be plastoquinone. Couples the redox reaction to proton translocation, and thus conserves the redox energy in a proton gradient. This chain is NAD(P)H-quinone oxidoreductase subunit 4L, chloroplastic, found in Angiopteris evecta (Mule's foot fern).